We begin with the raw amino-acid sequence, 55 residues long: Large ribosomal subunit protein bL33 (55 aa).

The protein belongs to the bacterial ribosomal protein bL33 family.

The protein is Large ribosomal subunit protein bL33 of Vibrio atlanticus (strain LGP32) (Vibrio splendidus (strain Mel32)).